The primary structure comprises 276 residues: Putative pyridoxine kinase (276 aa).

Position 139 (Asn-139) interacts with ATP. A Mg(2+)-binding site is contributed by Glu-142. ATP is bound by residues 176 to 180, Asp-188, Gly-213, and Lys-238; that span reads KGGKA.

Belongs to the ThiD family.

It carries out the reaction pyridoxal + ATP = pyridoxal 5'-phosphate + ADP + H(+). Phosphorylates B6 vitamers; functions in a salvage pathway. Uses pyridoxal, pyridoxine, and pyridoxamine as substrates. In Staphylococcus epidermidis (strain ATCC 12228 / FDA PCI 1200), this protein is Putative pyridoxine kinase (pdxK).